Consider the following 746-residue polypeptide: Protein Niban 2 (746 aa).

Residue glycine 2 is the site of N-myristoyl glycine attachment. Residues 68–192 enclose the PH domain; the sequence is RIVFSGNLFQ…WQAVLQDCIR (125 aa). Phosphoserine is present on residues serine 568, serine 574, serine 601, and serine 603. Residues 590–746 form a disordered region; it reads GEEYSNSGGG…EDSAGVQTEF (157 aa). The residue at position 606 (threonine 606) is a Phosphothreonine. Phosphoserine occurs at positions 609, 624, 638, 641, 646, 665, 681, 692, and 696. Low complexity predominate over residues 671 to 693; sequence PLLNGAPAGESPQPKAAPEASSP. A compositionally biased stretch (polar residues) spans 720–746; the sequence is GEQVSSPSSHPALHTTTEDSAGVQTEF.

This sequence belongs to the Niban family. In terms of processing, phosphorylated at Ser-641, Ser-646, Ser-692 and Ser-696 by the BRAF/MKK/ERK signaling cascade. In melanoma cells, the C-terminal phosphorylation may prevent targeting to the plasma membrane. Post-translationally, as apoptosis proceeds, degraded via an proteasome-independent pathway, probably by caspases.

The protein resides in the cytoplasm. Its subcellular location is the cytosol. It is found in the cell junction. The protein localises to the adherens junction. It localises to the membrane. In terms of biological role, may play a role in apoptosis suppression. May promote melanoma cell invasion in vitro. This is Protein Niban 2 from Homo sapiens (Human).